The following is a 48-amino-acid chain: Large ribosomal subunit protein bL32 (48 aa).

Positions 28–48 (VKDKDGSWKMPHRINKTTGEY) are disordered.

This sequence belongs to the bacterial ribosomal protein bL32 family.

This is Large ribosomal subunit protein bL32 from Campylobacter concisus (strain 13826).